The sequence spans 309 residues: HPr kinase/phosphorylase (309 aa).

Catalysis depends on residues His138 and Lys159. Position 153–160 (153–160 (GDSGIGKS)) interacts with ATP. A Mg(2+)-binding site is contributed by Ser160. The active-site Proton acceptor; for phosphorylation activity. Proton donor; for dephosphorylation activity is Asp177. The important for the catalytic mechanism of both phosphorylation and dephosphorylation stretch occupies residues 201–210 (LEIRGVGIID). A Mg(2+)-binding site is contributed by Glu202. Arg243 is a catalytic residue. The important for the catalytic mechanism of dephosphorylation stretch occupies residues 264–269 (PVKTGR).

The protein belongs to the HPrK/P family. As to quaternary structure, homohexamer. Mg(2+) serves as cofactor.

It carries out the reaction [HPr protein]-L-serine + ATP = [HPr protein]-O-phospho-L-serine + ADP + H(+). The enzyme catalyses [HPr protein]-O-phospho-L-serine + phosphate + H(+) = [HPr protein]-L-serine + diphosphate. Kinase activity is slightly activated by fructose 1,6-bisphosphate (FBP) at low ATP concentrations, and is inhibited by inorganic phosphate (Pi). Moreover, FBP, phosphoenolpyruvate and 2-phosphoglycerate, but not fructose 1-P, fructose 6-P, and ribulose 1,5-bisphosphate protect kinase activity against inhibition by Pi. Dephosphorylation of P-Ser-HPr by S.salivarius HPrK/P is strictly dependent on the presence of Pi, and is inhibited by FBP. FBP seems to modulate HPrK/P activities by enhancing affinity of the active site for ATP and, conversely, lowering the affinity for Pi. Catalyzes the ATP- as well as probably the pyrophosphate-dependent phosphorylation of 'Ser-46' in HPr, a phosphocarrier protein of the phosphoenolpyruvate-dependent sugar phosphotransferase system (PTS). HprK/P also catalyzes the pyrophosphate-producing, inorganic phosphate-dependent dephosphorylation (phosphorolysis) of seryl-phosphorylated HPr (P-Ser-HPr). The two antagonistic activities of HprK/P are regulated by several intracellular metabolites, which change their concentration in response to the absence or presence of rapidly metabolisable carbon sources (glucose, fructose, etc.) in the growth medium. Therefore, by controlling the phosphorylation state of HPr, the bifunctional HPr kinase/phosphorylase is a sensor enzyme that plays a major role in the regulation of carbon metabolism and sugar transport: it probably mediates carbon catabolite repression (CCR), and regulates PTS-catalyzed carbohydrate uptake and inducer exclusion. The polypeptide is HPr kinase/phosphorylase (hprK) (Streptococcus salivarius).